Reading from the N-terminus, the 364-residue chain is F-box/LRR-repeat protein At1g55660 (364 aa).

The F-box domain occupies 52 to 98; the sequence is MDKISQLPDELLVKVLSFLSTKDAVSTSILSMRWKSLWMWLPKLEYN. LRR repeat units follow at residues 158–179, 185–206, 207–228, 233–254, 256–277, and 279–300; these read NVRELSLKLFNFAELPTKLPKS, SIVILKLKDEILVDVPRKVCLP, SLKTLFLGRVTYSDANSLHRLL, VLEDLVMERDKIDNLGKLSVIV, SLQRLTLKMSRPCHLDGLKMNS, and SLKYLKVIDERLESDSDDESDS.

This Arabidopsis thaliana (Mouse-ear cress) protein is F-box/LRR-repeat protein At1g55660.